A 234-amino-acid chain; its full sequence is Large ribosomal subunit protein eL6 (234 aa).

Belongs to the eukaryotic ribosomal protein eL6 family.

The sequence is that of Large ribosomal subunit protein eL6 (RPL6) from Mesembryanthemum crystallinum (Common ice plant).